The primary structure comprises 1043 residues: Unconventional myosin-Ia (1043 aa).

The 687-residue stretch at 8–694 (VGVEDLVLLE…TLFYLEEQRR (687 aa)) folds into the Myosin motor domain. 101 to 108 (GESGSGKT) is an ATP binding site. The actin-binding stretch occupies residues 571 to 593 (VAILMKNLYSKSPNYIRCIKPNE). 3 IQ domains span residues 697 to 719 (LQQL…HYQL), 720 to 742 (MRKS…CYGK), and 743 to 772 (IKAS…SEAA). A TH1 domain is found at 858–1042 (KASYPQSVPI…KGSHCLEVTV (185 aa)).

It belongs to the TRAFAC class myosin-kinesin ATPase superfamily. Myosin family. In terms of processing, phosphorylated by ALPK1.

Functionally, involved in directing the movement of organelles along actin filaments. This chain is Unconventional myosin-Ia (MYO1A), found in Homo sapiens (Human).